A 445-amino-acid chain; its full sequence is Phosphoglucosamine mutase (445 aa).

Serine 102 serves as the catalytic Phosphoserine intermediate. Serine 102, aspartate 240, aspartate 242, and aspartate 244 together coordinate Mg(2+). Phosphoserine is present on serine 102.

The protein belongs to the phosphohexose mutase family. Mg(2+) serves as cofactor. Post-translationally, activated by phosphorylation.

It carries out the reaction alpha-D-glucosamine 1-phosphate = D-glucosamine 6-phosphate. In terms of biological role, catalyzes the conversion of glucosamine-6-phosphate to glucosamine-1-phosphate. The chain is Phosphoglucosamine mutase from Mycolicibacterium gilvum (strain PYR-GCK) (Mycobacterium gilvum (strain PYR-GCK)).